The sequence spans 445 residues: UDP-glucuronic acid decarboxylase 2 (445 aa).

At Ala-2 the chain carries N-acetylalanine. The Cytoplasmic portion of the chain corresponds to 2 to 43 (ASELINRRHETDQPTADAYYPKPIKPWFTVTRPMRYMLREQR). A helical; Signal-anchor for type II membrane protein membrane pass occupies residues 44-64 (LIFVLVGIAIATLVFTIFPRS). The Lumenal portion of the chain corresponds to 65-445 (TQSTPYSDPF…AATTTKTTSA (381 aa)). Residue 149–174 (DNFFTGRKENVMHHFSNPNFEMIRHD) coordinates NAD(+). Residue Arg-258 coordinates substrate. The active-site Proton acceptor is Tyr-261. 261–265 (YDEGK) is an NAD(+) binding site. Position 290 (Asn-290) interacts with substrate. Arg-302 provides a ligand contact to NAD(+). Residues 303-307 (VVSNF), 320-327 (YGDGKQTR), and 387-391 (DPHKR) contribute to the substrate site.

This sequence belongs to the NAD(P)-dependent epimerase/dehydratase family. UDP-glucuronic acid decarboxylase subfamily. Homodimer. NAD(+) is required as a cofactor. As to expression, ubiquitous.

The protein localises to the golgi apparatus. It localises to the golgi stack membrane. It catalyses the reaction UDP-alpha-D-glucuronate + H(+) = UDP-alpha-D-xylose + CO2. Its pathway is nucleotide-sugar biosynthesis; UDP-alpha-D-xylose biosynthesis; UDP-alpha-D-xylose from UDP-alpha-D-glucuronate: step 1/1. Functionally, catalyzes the NAD-dependent decarboxylation of UDP-glucuronic acid to UDP-xylose. Necessary for the biosynthesis of the core tetrasaccharide in glycosaminoglycan biosynthesis. The sequence is that of UDP-glucuronic acid decarboxylase 2 (UXS2) from Arabidopsis thaliana (Mouse-ear cress).